Reading from the N-terminus, the 710-residue chain is Choline transporter-like protein 4 (710 aa).

Topologically, residues 1–34 (MGGKQRDEDDEAYGKPVKYDPSFRGPIKNRSCTD) are cytoplasmic. A helical transmembrane segment spans residues 35-55 (VICCVLFLLFILGYIVVGIVA). Residues 56 to 229 (WLYGDPRQVL…KIFEDFAQSW (174 aa)) lie on the Extracellular side of the membrane. 3 N-linked (GlcNAc...) asparagine glycosylation sites follow: N69, N155, and N197. A helical transmembrane segment spans residues 230-250 (YWILVALGVALVLSLLFILLL). Residues 251–252 (RL) lie on the Cytoplasmic side of the membrane. Residues 253-273 (VAGPLVLVLILGVLGVLAYGI) traverse the membrane as a helical segment. Residues 274 to 309 (YYCWEEYRVLRDKGASISQLGFTTNLSAYQSVQETW) are Extracellular-facing. Residue N298 is glycosylated (N-linked (GlcNAc...) asparagine). A helical membrane pass occupies residues 310–330 (LAALIVLAVLEAILLLMLIFL). At 331–358 (RQRIRIAIALLKEASKAVGQMMSTMFYP) the chain is on the cytoplasmic side. The chain crosses the membrane as a helical span at residues 359–379 (LVTFVLLLICIAYWAMTALYL). The Extracellular segment spans residues 380-455 (ATSGQPQYVL…GVLGLFWTLN (76 aa)). Residues N393, N405, and N416 are each glycosylated (N-linked (GlcNAc...) asparagine). Residues 456–476 (WVLALGQCVLAGAFASFYWAF) form a helical membrane-spanning segment. The Cytoplasmic segment spans residues 477–501 (HKPQDIPTFPLISAFIRTLRYHTGS). A helical membrane pass occupies residues 502 to 522 (LAFGALILTLVQIARVILEYI). Residues 523–560 (DHKLRGVQNPVARCIMCCFKCCLWCLEKFIKFLNRNAY) are Extracellular-facing. The helical transmembrane segment at 561 to 581 (IMIAIYGKNFCVSAKNAFMLL) threads the bilayer. Residues 582-597 (MRNIVRVVVLDKVTDL) lie on the Cytoplasmic side of the membrane. Residues 598–618 (LLFFGKLLVVGGVGVLSFFFF) form a helical membrane-spanning segment. At 619-638 (SGRIPGLGKDFKSPHLNYYW) the chain is on the extracellular side. Residues 639–659 (LPIMTSILGAYVIASGFFSVF) traverse the membrane as a helical segment. The Cytoplasmic segment spans residues 660–710 (GMCVDTLFLCFLEDLERNNGSLDRPYYMSKSLLKILGKKNEAPPDNKKRKK).

The protein belongs to the CTL (choline transporter-like) family. Post-translationally, N-glycosylated; N-glycosylation of Asn-69, Asn-155 and Asn-393 is required for a proper thiamine pyrophosphate uptake. In terms of tissue distribution, highly expressed in colon, also detected in prostate, trachea and lung. Isoform 3 is also expressed in colon but a lower levels. Expressed in colon at low levels.

It localises to the membrane. Its subcellular location is the apical cell membrane. It carries out the reaction choline(out) + n H(+)(in) = choline(in) + n H(+)(out). The enzyme catalyses thiamine diphosphate(out) = thiamine diphosphate(in). In terms of biological role, choline transporter that plays a role in the choline-acetylcholine system and is required to the efferent innervation of hair cells in the olivocochlear bundle for the maintenance of physiological function of outer hair cells and the protection of hair cells from acoustic injury. Also described as a thiamine pyrophosphate transporter in colon, may mediate the absorption of microbiota-generated thiamine pyrophosphate and contribute to host thiamine (vitamin B1) homeostasis. Its function is as follows. Also has thiamine pyrophosphate transporter activity. This chain is Choline transporter-like protein 4, found in Homo sapiens (Human).